The sequence spans 286 residues: 5-amino-6-(5-phospho-D-ribitylamino)uracil phosphatase YwtE (286 aa).

Aspartate 7 functions as the Nucleophile in the catalytic mechanism. A Mg(2+)-binding site is contributed by aspartate 7. Leucine 8 is a phosphate binding site. Residue aspartate 9 coordinates Mg(2+). Residues 41–42 and lysine 210 each bind phosphate; that span reads TG. Residues aspartate 233 and serine 234 each coordinate Mg(2+). Asparagine 236 provides a ligand contact to phosphate.

This sequence belongs to the HAD-like hydrolase superfamily. Cof family. Requires Mg(2+) as cofactor.

The enzyme catalyses 5-amino-6-(5-phospho-D-ribitylamino)uracil + H2O = 5-amino-6-(D-ribitylamino)uracil + phosphate. It functions in the pathway cofactor biosynthesis; riboflavin biosynthesis; 5-amino-6-(D-ribitylamino)uracil from GTP: step 4/4. Its function is as follows. Catalyzes the dephosphorylation of the riboflavin precursor 5-amino-6-(5-phospho-D-ribitylamino)uracil and of flavin mononucleotide (FMN) in vitro. Also catalyzes the dephosphorylation of phosphorylated 5-6 carbon sugars and monophosphate nucleotides (NMP) in vitro. This chain is 5-amino-6-(5-phospho-D-ribitylamino)uracil phosphatase YwtE (ywtE), found in Bacillus subtilis (strain 168).